Reading from the N-terminus, the 84-residue chain is MTDIFANPDKTLDALGLRCPEPVMMVRKTVRHMEDGQTLLIIADDPATTRDIPGFCRFMDHQLLAQDTGQTPYRYLVKKGAKAE.

Cys-19 serves as the catalytic Cysteine persulfide intermediate.

This sequence belongs to the sulfur carrier protein TusA family. Interacts with IscS.

It localises to the cytoplasm. It participates in tRNA modification. Functionally, sulfur carrier protein involved in sulfur trafficking in the cell. Part of a sulfur-relay system required for 2-thiolation during synthesis of 2-thiouridine of the modified wobble base 5-methylaminomethyl-2-thiouridine (mnm(5)s(2)U) in tRNA. Interacts with IscS and stimulates its cysteine desulfurase activity. Accepts an activated sulfur from IscS, which is then transferred to TusD, and thus determines the direction of sulfur flow from IscS to 2-thiouridine formation. Also appears to be involved in sulfur transfer for the biosynthesis of molybdopterin. The sequence is that of Sulfur carrier protein TusA from Yersinia enterocolitica serotype O:8 / biotype 1B (strain NCTC 13174 / 8081).